A 1719-amino-acid polypeptide reads, in one-letter code: MNGHSDEESVRNSSGESRSDDDSGSASGSGSGSSSGSSSDGSSSQSGSSDSESGSESGSQSESESDTSREKKQVQAKPPKADGSEFWKSSPSILAVQRSAVLKKQQQQQKAASSDSGSEEDSSSSEDSADDSSSETKKKKHKDEDWQMSGSGSVSGTGSDSESEEDGDKSSCEESESDYEPKNKVKSRKPPSRIKPKSGKKSTGQKKRQLDSSEEEEDDDEDYDKRGSRRQATVNVSYKEAEETKTDSDDLLEVCGEDVPQTEEDEFETIEKFMDSRIGRKGATGASTTIYAVEVDGDPNAGFEKSKELGEIQYLIKWKGWSHIHNTWETEETLKQQNVKGMKKLDNYKKKDQETKRWLKNASPEDVEYYNCQQELTDDLHKQYQIVERIIAHSNQKSAAGYPDYYCKWQGLPYSECSWEDGALIAKKFQARIDEYFSRNQSKTTPFKDCKVLKQRPRFVALKKQPSYIGGHESLELRDYQLNGLNWLAHSWCKGNSCILADEMGLGKTIQTISFLNYLFHEHQLYGPFLLVVPLSTLTSWQREIQTWAPQMNAVVYLGDITSRNMIRTHEWMHPQTKRLKFNILLTTYEILLKDKSFLGGLNWAFIGVDEAHRLKNDDSLLYKTLIDFKSNHRLLITGTPLQNSLKELWSLLHFIMPEKFSSWEDFEEEHGKGREYGYASLHKELEPFLLRRVKKDVEKSLPAKVEQILRMEMSALQKQYYKWILTRNYKALSKGSKGSTSGFLNIMMELKKCCNHCYLIKPPDDNEFYNKQEALQHLIRSSGKLILLDKLLIRLRERGNRVLIFSQMVRMLDILAEYLKYRQFPFQRLDGSIKGELRKQALDHFNAEGSEDFCFLLSTRAGGLGINLASADTVVIFDSDWNPQNDLQAQARAHRIGQKKQVNIYRLVTKGSVEEDILERAKKKMVLDHLVIQRMDTTGKTVLHTGSTPSSSTPFNKEELSAILKFGAEELFKEPEGEEQEPQEMDIDEILKRAETRENEPGPLTVGDELLSQFKVANFSNMDEDDIELEPERNSRNWEEIIPESQRRRIEEEERQKELEEIYMLPRMRNCAKQISFNGSEGRRSRSRRYSGSDSDSITERKRPKKRGRPRTIPRENIKGFSDAEIRRFIKSYKKFGGPLERLDAVARDAELVDKSETDLRRLGELVHNGCIKALKDNSSGQERAGGRLGKVKGPTFRISGVQVNAKLVISHEEELAPLHKSIPSDPEERKRYVIPCHTKAAHFDIDWGKEDDSNLLVGIYEYGYGSWEMIKMDPDLSLTQKILPDDPDKKPQAKQLQTRADYLIKLLNKDLARKEAQRLAGAGNSKRRKTRNKKNKMKASKIKEEIKSDSSPQPSEKSDEDDDEEDNKVNEIKSENKEKSKKIPLLDTPVHITATSEPVPISEESEELDQKTFSVCKERMRPVKAALKQLDRPEKGLSEREQLEHTRQCLIKIGDHITECLKEYTNPEQIKQWRKNLWIFVSKFTEFDARKLHKLYKHAIKKRQESQQHNDQNISSNVNTHVIRNPDVERLKETTNHDDSSRDSYSSDRHLSQYHDHHKDRHQGDAYKKSDSRKRPYSAFSNGKDHRDWDHYKQDSRYYSDSKHRKLDDHRSRDHRSNLEGNLKDSRGHSDHRSHSDHRIHSDHRSTSEYSHHKSSRDYRYHSDWQMDHRASGSGPRSPLDQRSPYGSRSPLGHRSPFEHSSDHKSTPEHTWSSRKT.

The span at 1 to 10 (MNGHSDEESV) shows a compositional bias: basic and acidic residues. Positions 1–249 (MNGHSDEESV…EAEETKTDSD (249 aa)) are disordered. Positions 34-62 (SSGSSSDGSSSQSGSSDSESGSESGSQSE) are enriched in low complexity. The segment covering 66–85 (DTSREKKQVQAKPPKADGSE) has biased composition (basic and acidic residues). Over residues 103-116 (KKQQQQQKAASSDS) the composition is skewed to low complexity. Over residues 117–133 (GSEEDSSSSEDSADDSS) the composition is skewed to acidic residues. The span at 149 to 160 (SGSGSVSGTGSD) shows a compositional bias: low complexity. The span at 161-178 (SESEEDGDKSSCEESESD) shows a compositional bias: acidic residues. Over residues 184-207 (KVKSRKPPSRIKPKSGKKSTGQKK) the composition is skewed to basic residues. The segment covering 212 to 222 (SSEEEEDDDED) has biased composition (acidic residues). Residues 239–248 (KEAEETKTDS) show a composition bias toward basic and acidic residues. 2 Chromo domains span residues 268-360 (ETIE…RWLK) and 385-448 (QIVE…TPFK). A Helicase ATP-binding domain is found at 489–659 (AHSWCKGNSC…WSLLHFIMPE (171 aa)). ATP is bound at residue 502–509 (DEMGLGKT). The DEAH box signature appears at 610–613 (DEAH). One can recognise a Helicase C-terminal domain in the interval 788 to 939 (LLDKLLIRLR…HLVIQRMDTT (152 aa)). Disordered stretches follow at residues 1076–1116 (ISFN…TIPR), 1319–1393 (QRLA…TPVH), and 1503–1719 (KKRQ…SRKT). Composition is skewed to basic residues over residues 1103–1113 (KRPKKRGRPRT) and 1327–1342 (SKRRKTRNKKNKMKAS). The span at 1369 to 1380 (NKVNEIKSENKE) shows a compositional bias: basic and acidic residues. The tract at residues 1410 to 1512 (LDQKTFSVCK…KKRQESQQHN (103 aa)) is CHD1 helical C-terminal domain (CHCT). The segment covering 1511–1524 (HNDQNISSNVNTHV) has biased composition (polar residues). Basic and acidic residues-rich tracts occupy residues 1526-1576 (RNPD…DSRK), 1585-1673 (GKDH…DHRA), and 1698-1710 (SPFEHSSDHKSTP).

The protein belongs to the SNF2/RAD54 helicase family. Component of the SAGA complex. Interacts with SSRP1.

The protein resides in the nucleus. Its subcellular location is the chromosome. The protein localises to the centromere. It catalyses the reaction ATP + H2O = ADP + phosphate + H(+). Functionally, ATP-dependent chromatin-remodeling factor which functions as substrate recognition component of the transcription regulatory histone acetylation (HAT) complex SAGA. Regulates polymerase II transcription. Also required for efficient transcription by RNA polymerase I, and more specifically the polymerase I transcription termination step. Regulates negatively DNA replication. Not only involved in transcription-related chromatin remodeling, but also required to maintain a specific chromatin configuration across the genome. Required for maintaining open chromatin and pluripotency in embryonic stem cells. Required for centromeric localization of CENPA. This chain is Chromodomain-helicase-DNA-binding protein 1 (CHD1), found in Gallus gallus (Chicken).